The following is a 336-amino-acid chain: Protein-glutamate methylesterase/protein-glutamine glutaminase 3 (336 aa).

In terms of domain architecture, Response regulatory spans lysine 2–leucine 119. Residue aspartate 53 is modified to 4-aspartylphosphate. A CheB-type methylesterase domain is found at proline 147–glutamine 336. Catalysis depends on residues serine 159, histidine 186, and aspartate 279.

It belongs to the CheB family. Post-translationally, phosphorylated by CheA. Phosphorylation of the N-terminal regulatory domain activates the methylesterase activity.

The protein localises to the cytoplasm. The catalysed reaction is [protein]-L-glutamate 5-O-methyl ester + H2O = L-glutamyl-[protein] + methanol + H(+). It catalyses the reaction L-glutaminyl-[protein] + H2O = L-glutamyl-[protein] + NH4(+). Its function is as follows. Involved in chemotaxis. Part of a chemotaxis signal transduction system that modulates chemotaxis in response to various stimuli. Catalyzes the demethylation of specific methylglutamate residues introduced into the chemoreceptors (methyl-accepting chemotaxis proteins or MCP) by CheR. Also mediates the irreversible deamidation of specific glutamine residues to glutamic acid. The sequence is that of Protein-glutamate methylesterase/protein-glutamine glutaminase 3 from Pseudomonas savastanoi pv. phaseolicola (strain 1448A / Race 6) (Pseudomonas syringae pv. phaseolicola (strain 1448A / Race 6)).